The primary structure comprises 638 residues: MAPKPPAGTSSRAWDGVSPSLSEWVLEAVSSMGFTRMTPVQASAIPLFMAHKDVVVEAVTGSGKTLSFLIPIVEKLLRLEEPIKKHHVGAIIISPTRELASQIYHVLLSLLAFHPPSASVINPSEDDDVPRQKFPSSTLKVVPQLLLGGSTTPAEDLSKFLKQSPNLLVSTPGRLLELLSSPHVHCPQSSFEMLVLDEADRLLDLGFKETLQNIIRRLPKQRRTGLFSASISEAVDQIVRVGLRNPVKVMVKVKGTSGAQDKRTPASLQMTYLTTPTIHKFDALKHILHSVDPTPQKTIFFASTCSGVDYLSAILPLILGDDFQLISLHGKHPANVREKNFNRFVNSYSPAILLTTDVASRGLDIPSVDLVVQIDPPSDPKTFIHRCGRAGRAGRRGLSVVLLHPGREEDYVSFLEVRKTPVAPFPHPISFSESEATAATKAVRKAVLADRALHDRGQKAFVSWLRSYSKHQASSIFRVADLDWESLGKAWGLLKLPKMPELRNFTGDRTLGVNLDWDDYKYKDKQREKRRIELLQESKEGDGTQESSNKRKATETTAWSNKLDDRNKKQKRREQKQRRQEKNKWEKMTEEERQKIRETEQMVESIRVKNEEERRLRRAGKAEAANAGKDEEEFEGFD.

A Q motif motif is present at residues 14-42 (WDGVSPSLSEWVLEAVSSMGFTRMTPVQA). Residues 45-249 (IPLFMAHKDV…RVGLRNPVKV (205 aa)) enclose the Helicase ATP-binding domain. 58-65 (AVTGSGKT) contributes to the ATP binding site. The DEAD box signature appears at 197–200 (DEAD). Residues 283 to 437 (ALKHILHSVD…PISFSESEAT (155 aa)) enclose the Helicase C-terminal domain. Composition is skewed to basic and acidic residues over residues 534–554 (LLQESKEGDGTQESSNKRKAT) and 577–615 (QRRQEKNKWEKMTEEERQKIRETEQMVESIRVKNEEERR). Residues 534-638 (LLQESKEGDG…KDEEEFEGFD (105 aa)) are disordered. Positions 566–619 (RNKKQKRREQKQRRQEKNKWEKMTEEERQKIRETEQMVESIRVKNEEERRLRRA) form a coiled coil.

Belongs to the DEAD box helicase family. DDX55/SPB4 subfamily. In terms of assembly, component of pre-60S ribosomal complexes.

It localises to the nucleus. Its subcellular location is the nucleolus. It catalyses the reaction ATP + H2O = ADP + phosphate + H(+). Its function is as follows. ATP-binding RNA helicase involved in the biogenesis of 60S ribosomal subunits. Binds 90S pre-ribosomal particles and dissociates from pre-60S ribosomal particles after processing of 27SB pre-rRNA. Required for the normal formation of 18S rRNA through the processing of pre-rRNAs at sites A0, A1 and A2, and the normal formation of 25S and 5.8S rRNAs through the processing of pre-rRNAs at sites C1 and C2. This is ATP-dependent rRNA helicase spb4 from Aspergillus oryzae (strain ATCC 42149 / RIB 40) (Yellow koji mold).